The primary structure comprises 563 residues: Arginine--tRNA ligase (563 aa).

Residues 122 to 132 carry the 'HIGH' region motif; it reads PNIAKPISMGH.

It belongs to the class-I aminoacyl-tRNA synthetase family. Monomer.

It localises to the cytoplasm. The catalysed reaction is tRNA(Arg) + L-arginine + ATP = L-arginyl-tRNA(Arg) + AMP + diphosphate. In Enterococcus faecalis (strain ATCC 700802 / V583), this protein is Arginine--tRNA ligase.